We begin with the raw amino-acid sequence, 113 residues long: Mini zinc finger protein 2 (113 aa).

The ZF-HD dimerization-type; degenerate zinc finger occupies 24–83 (YGECRRNHAASTGGHAVDGCREFIAAEDGGGGNSTSAVGVAAAALKCAACGCHRSFHRRV). The interval 93–113 (DCASGDTSSSSPSSSSSLSSE) is disordered. The span at 100-113 (SSSSPSSSSSLSSE) shows a compositional bias: low complexity.

Homo- and heterodimers.

Its subcellular location is the cytoplasm. Inhibits zinc finger homeodomain (ZHD) transcription factors, by interacting with them to prevent both their nuclear localization and their DNA-binding properties. This chain is Mini zinc finger protein 2 (MIF3), found in Oryza sativa subsp. japonica (Rice).